Reading from the N-terminus, the 364-residue chain is Apyrase (364 aa).

Positions 1–35 are cleaved as a signal peptide; it reads MRSSYRVGNPIRFQPTNVVGLLLLSLVLSFMLVQS.

Belongs to the apyrase family. The cofactor is Ca(2+). In terms of tissue distribution, salivary gland (at protein level).

Its subcellular location is the secreted. The enzyme catalyses a ribonucleoside 5'-triphosphate + 2 H2O = a ribonucleoside 5'-phosphate + 2 phosphate + 2 H(+). In terms of biological role, facilitates hematophagy by inhibiting ADP-dependent platelet aggregation in the host. Cleaves adenosine triphosphate (ATP) and adenosine diphosphate (ADP) to adenosine monophosphate (AMP) and inorganic phosphate in calcium-dependent manner. This is Apyrase from Cimex lectularius (Bed bug).